Reading from the N-terminus, the 180-residue chain is Large ribosomal subunit protein uL5 (180 aa).

Belongs to the universal ribosomal protein uL5 family. In terms of assembly, part of the 50S ribosomal subunit; part of the 5S rRNA/L5/L18/L25 subcomplex. Contacts the 5S rRNA and the P site tRNA. Forms a bridge to the 30S subunit in the 70S ribosome.

This is one of the proteins that bind and probably mediate the attachment of the 5S RNA into the large ribosomal subunit, where it forms part of the central protuberance. In the 70S ribosome it contacts protein S13 of the 30S subunit (bridge B1b), connecting the 2 subunits; this bridge is implicated in subunit movement. Contacts the P site tRNA; the 5S rRNA and some of its associated proteins might help stabilize positioning of ribosome-bound tRNAs. The protein is Large ribosomal subunit protein uL5 of Limosilactobacillus fermentum (strain NBRC 3956 / LMG 18251) (Lactobacillus fermentum).